We begin with the raw amino-acid sequence, 465 residues long: UDP-N-acetylmuramate--L-alanine ligase (465 aa).

Position 115 to 121 (115 to 121) interacts with ATP; the sequence is GAHGKTT.

The protein belongs to the MurCDEF family.

Its subcellular location is the cytoplasm. It catalyses the reaction UDP-N-acetyl-alpha-D-muramate + L-alanine + ATP = UDP-N-acetyl-alpha-D-muramoyl-L-alanine + ADP + phosphate + H(+). It functions in the pathway cell wall biogenesis; peptidoglycan biosynthesis. In terms of biological role, cell wall formation. This chain is UDP-N-acetylmuramate--L-alanine ligase, found in Coxiella burnetii (strain CbuK_Q154) (Coxiella burnetii (strain Q154)).